The following is a 1027-amino-acid chain: 2-oxoglutarate dehydrogenase, mitochondrial (1027 aa).

Thiamine diphosphate is bound by residues R315, D413, N446, I448, and Q674. 3 residues coordinate Mg(2+): D413, N446, and I448.

The protein belongs to the alpha-ketoglutarate dehydrogenase family. In terms of assembly, homodimer. Component of the 2-oxoglutarate dehydrogenase complex. The cofactor is thiamine diphosphate. Requires Mg(2+) as cofactor.

The protein localises to the mitochondrion matrix. It catalyses the reaction N(6)-[(R)-lipoyl]-L-lysyl-[protein] + 2-oxoglutarate + H(+) = N(6)-[(R)-S(8)-succinyldihydrolipoyl]-L-lysyl-[protein] + CO2. In terms of biological role, the 2-oxoglutarate dehydrogenase complex catalyzes the overall conversion of 2-oxoglutarate to succinyl-CoA and CO(2). It contains multiple copies of three enzymatic components: 2-oxoglutarate dehydrogenase (E1), dihydrolipoamide succinyltransferase (E2) and lipoamide dehydrogenase (E3). The chain is 2-oxoglutarate dehydrogenase, mitochondrial (ogdh-1) from Caenorhabditis briggsae.